Reading from the N-terminus, the 611-residue chain is uncharacterized protein (611 aa).

Residues 51–351 form the SAC domain; that stretch reads LYGFIRLKIY…DYHKQGSRNL (301 aa).

This sequence to yeast RSD1 and S.pombe SpBC19F5.03.

This is an uncharacterized protein from Schizosaccharomyces pombe (strain 972 / ATCC 24843) (Fission yeast).